Reading from the N-terminus, the 162-residue chain is MASSRVVLILSISMVLLSSVAIAATDYIVGDDKGWTVDFDYTQWAQDKVFRVGDNLVFNYDPSRHNVFKVNGTLFQSCTFPPKNEALSTGKDIIQLKTEGRKWYVCGVADHCSARQMKLVITVLAEGAPAPSPPPSSDAHSVVSSLFGVVMAIMVAIAVIFA.

An N-terminal signal peptide occupies residues Met-1–Ala-23. The Phytocyanin domain occupies Thr-25–Ala-125. His-65 is a binding site for Cu cation. Asn-71 is a glycosylation site (N-linked (GlcNAc...) asparagine). Cys-78 and Cys-112 are disulfide-bonded. Cu cation contacts are provided by Cys-106, His-111, and Met-117. The chain crosses the membrane as a helical span at residues Val-142–Ala-162.

The protein localises to the membrane. In Medicago truncatula (Barrel medic), this protein is Blue copper protein 1b.